The primary structure comprises 266 residues: Blue copper protein (266 aa).

The signal sequence occupies residues 1 to 24; the sequence is MAYSKILFCFMIGFVGFLPAITMA. 3 consecutive Phytocyanin domains span residues 25 to 56, 57 to 102, and 116 to 216; these read TQYLVGDDRGWTLDFDYQTWAKNKTFKVGDTL, APPP…TVED, and TEYW…TVEG. Residue N47 is glycosylated (N-linked (GlcNAc...) asparagine). H156 serves as a coordination point for Cu cation. N-linked (GlcNAc...) asparagine glycosylation occurs at N162. A disulfide bridge connects residues C169 and C203. C197, H202, and Q208 together coordinate Cu cation. Residues 245–265 traverse the membrane as a helical segment; the sequence is ITSPYKMFVGGAVSIWTILTL.

It localises to the membrane. The polypeptide is Blue copper protein (Petunia hybrida (Petunia)).